A 204-amino-acid polypeptide reads, in one-letter code: 3-dehydroquinate dehydratase (204 aa).

3-dehydroquinate-binding positions include Ser9, 30 to 32, and Arg57; that span reads ELR. His108 functions as the Proton donor/acceptor in the catalytic mechanism. Lys133 acts as the Schiff-base intermediate with substrate in catalysis. 3-dehydroquinate-binding residues include Arg167, Thr186, and Gln190.

The protein belongs to the type-I 3-dehydroquinase family. In terms of assembly, homodimer.

The catalysed reaction is 3-dehydroquinate = 3-dehydroshikimate + H2O. The protein operates within metabolic intermediate biosynthesis; chorismate biosynthesis; chorismate from D-erythrose 4-phosphate and phosphoenolpyruvate: step 3/7. Involved in the third step of the chorismate pathway, which leads to the biosynthesis of aromatic amino acids. Catalyzes the cis-dehydration of 3-dehydroquinate (DHQ) and introduces the first double bond of the aromatic ring to yield 3-dehydroshikimate. The protein is 3-dehydroquinate dehydratase of Metallosphaera sedula (strain ATCC 51363 / DSM 5348 / JCM 9185 / NBRC 15509 / TH2).